We begin with the raw amino-acid sequence, 313 residues long: MKLTDSVLRSFRVAKVFRENSDKINCFDFSPNGETVISSSDDDSIVLYDCQEGKPKRTLYSKKYGVDLIRYTHAANTVVYSSNKIDDTIRYLSLHDNKYIRYFPGHSKRVVALSMSPVDDTFISGSLDKTIRLWDLRSPNCQGLMHLQGKPVCSFDPEGLIFAAGVNSEMVKLYDLRSFDKGPFATFKMQYDRTCEWTGLKFSNDGKLILISTNGSFIRLIDAFKGVVMHTFGGYANSKAVTLEASFTPDSQFIMIGSEDGKIHVWNGESGIKVAVLDGKHTGPITCLQFNPKFMTFASACSNMAFWLPTIDD.

6 WD repeats span residues 19-58 (ENSDKINCFDFSPNGETVISSSDDDSIVLYDCQEGKPKRT), 105-144 (GHSKRVVALSMSPVDDTFISGSLDKTIRLWDLRSPNCQGL), 146-184 (HLQGKPVCSFDPEGLIFAAGVNSEMVKLYDLRSFDKGPF), 192-231 (DRTCEWTGLKFSNDGKLILISTNGSFIRLIDAFKGVVMHT), 236-276 (ANSK…KVAV), and 280-313 (KHTGPITCLQFNPKFMTFASACSNMAFWLPTIDD).

Belongs to the WD repeat SWD2 family. In terms of assembly, component of the SET1/COMPASS complex, at least composed of the catalytic subunit (SETD1A or SETD1B), WDR5, WDR82, RBBP5, ASH2L/ASH2, CXXC1/CFP1, HCFC1 and DPY30. Component of the PNUTS-PP1 phosphatase complex, composed of PPP1R10/PNUTS, TOX4, WDR82, and PPP1CA or PPP1CB or PPP1CC. Associated with multiple protein complexes including an RNA polymerase II complex, MLL3/MLL4 complex and a chaperonin-containing TCP1 complex. Interacts with SETD1B (via N-terminal region); the interaction is direct. Interacts with SETD1A (via N-terminal region); the interaction is direct. Interacts with CUL4B. Interacts with RBBP5. Interacts with POLR2B. Interacts with hyperphosphorylated C-terminal domain (CTD) of RNA polymerase II large subunit (POLR2A). Binds specifically to CTD heptad repeats phosphorylated on 'Ser-5' of each heptad. SETD1A enhances its interaction with POLR2A. Interacts with PPP1R10/PNUTS. Interacts with PPP1CA in the presence of PPP1R10/PNUTS. Interacts with ZC3H4; interaction is independent of the SET1 complex and promotes transcription termination of long non-coding RNAs (lncRNAs).

Its subcellular location is the nucleus. It localises to the chromosome. It is found in the cytoplasm. Its function is as follows. Regulatory component of the SET1/COMPASS complex implicated in the tethering of this complex to transcriptional start sites of active genes. Facilitates histone H3 'Lys-4' methylation (H3K4me) via recruitment of the SETD1A or SETD1B to the 'Ser-5' phosphorylated C-terminal domain (CTD) of RNA polymerase II large subunit (POLR2A). Component of the PNUTS-PP1 protein phosphatase complex, a protein phosphatase 1 (PP1) complex that promotes RNA polymerase II transcription pause-release, allowing transcription elongation. PNUTS-PP1 also plays a role in the control of chromatin structure and cell cycle progression during the transition from mitosis into interphase. Together with ZC3H4, but independently of the SET1 complex, part of a transcription termination checkpoint that promotes transcription termination of long non-coding RNAs (lncRNAs). The transcription termination checkpoint is activated by the inefficiently spliced first exon of lncRNAs and promotes transcription termination of lncRNAs and their subsequent degradation by the exosome. This is WD repeat-containing protein 82 from Homo sapiens (Human).